The primary structure comprises 493 residues: 3-octaprenyl-4-hydroxybenzoate carboxy-lyase (493 aa).

Residue Asn172 participates in Mn(2+) binding. Prenylated FMN is bound by residues Ile175–Arg177, Arg189–Leu191, and Arg194–Gly195. Residue Glu238 participates in Mn(2+) binding. The Proton donor role is filled by Asp287.

Belongs to the UbiD family. In terms of assembly, homohexamer. It depends on prenylated FMN as a cofactor. Requires Mn(2+) as cofactor.

The protein resides in the cell membrane. It carries out the reaction a 4-hydroxy-3-(all-trans-polyprenyl)benzoate + H(+) = a 2-(all-trans-polyprenyl)phenol + CO2. It participates in cofactor biosynthesis; ubiquinone biosynthesis. Catalyzes the decarboxylation of 3-octaprenyl-4-hydroxy benzoate to 2-octaprenylphenol, an intermediate step in ubiquinone biosynthesis. This chain is 3-octaprenyl-4-hydroxybenzoate carboxy-lyase, found in Shewanella pealeana (strain ATCC 700345 / ANG-SQ1).